The primary structure comprises 134 residues: Complexin-2 (134 aa).

The tract at residues 1 to 114 is disordered; sequence MDFVMKQALG…CGDEEEEEEE (114 aa). Basic and acidic residues predominate over residues 15–85; that stretch reads DMGKMLGGEE…EEKEAEEKAA (71 aa). Residues 28 to 84 adopt a coiled-coil conformation; sequence PDAQKKEEERQEALRQQEEERKAKHARMEAEREKVRQQIRDKYGLKKKEEKEAEEKA. The interval 41 to 97 is interaction with the SNARE complex; sequence LRQQEEERKAKHARMEAEREKVRQQIRDKYGLKKKEEKEAEEKAALEQPCEGSLTRP. At S93 the chain carries Phosphoserine.

It belongs to the complexin/synaphin family. Binds to the SNARE core complex containing SNAP25, VAMP2 and STX1A. Nervous system. Also present in adrenal chromaffin cells (at protein level).

It is found in the cytoplasm. The protein resides in the cytosol. The protein localises to the presynapse. It localises to the nucleus. Its subcellular location is the perikaryon. Its function is as follows. Negatively regulates the formation of synaptic vesicle clustering at active zone to the presynaptic membrane in postmitotic neurons. Positively regulates a late step in exocytosis of various cytoplasmic vesicles, such as synaptic vesicles and other secretory vesicles. Also involved in mast cell exocytosis. The chain is Complexin-2 (CPLX2) from Bos taurus (Bovine).